Reading from the N-terminus, the 193-residue chain is Holliday junction branch migration complex subunit RuvA (193 aa).

Positions 1–64 are domain I; sequence MIGRIQGTLV…EDAQQLFGFA (64 aa). The domain II stretch occupies residues 65 to 139; it reads TETEREAFRQ…GKLAPDLGVA (75 aa). The interval 139–143 is flexible linker; the sequence is AGGKP. Positions 144 to 193 are domain III; that stretch reads QAIETSSEVLQALLALGYSEKEALLALKQIPADTSISDGIRMGLKYLSKA.

The protein belongs to the RuvA family. In terms of assembly, homotetramer. Forms an RuvA(8)-RuvB(12)-Holliday junction (HJ) complex. HJ DNA is sandwiched between 2 RuvA tetramers; dsDNA enters through RuvA and exits via RuvB. An RuvB hexamer assembles on each DNA strand where it exits the tetramer. Each RuvB hexamer is contacted by two RuvA subunits (via domain III) on 2 adjacent RuvB subunits; this complex drives branch migration. In the full resolvosome a probable DNA-RuvA(4)-RuvB(12)-RuvC(2) complex forms which resolves the HJ.

It localises to the cytoplasm. Its function is as follows. The RuvA-RuvB-RuvC complex processes Holliday junction (HJ) DNA during genetic recombination and DNA repair, while the RuvA-RuvB complex plays an important role in the rescue of blocked DNA replication forks via replication fork reversal (RFR). RuvA specifically binds to HJ cruciform DNA, conferring on it an open structure. The RuvB hexamer acts as an ATP-dependent pump, pulling dsDNA into and through the RuvAB complex. HJ branch migration allows RuvC to scan DNA until it finds its consensus sequence, where it cleaves and resolves the cruciform DNA. This Polynucleobacter necessarius subsp. necessarius (strain STIR1) protein is Holliday junction branch migration complex subunit RuvA.